The following is a 151-amino-acid chain: Ribosome maturation factor RimP (151 aa).

This sequence belongs to the RimP family.

Its subcellular location is the cytoplasm. In terms of biological role, required for maturation of 30S ribosomal subunits. This is Ribosome maturation factor RimP from Thermoanaerobacter pseudethanolicus (strain ATCC 33223 / 39E) (Clostridium thermohydrosulfuricum).